The sequence spans 542 residues: CTP synthase (542 aa).

Positions 1–265 (MARYVFITGG…DDEVLAAFGI (265 aa)) are amidoligase domain. Ser13 lines the CTP pocket. Position 13 (Ser13) interacts with UTP. ATP is bound by residues 14 to 19 (SLGKGI) and Asp71. Positions 71 and 139 each coordinate Mg(2+). CTP-binding positions include 146–148 (DIE), 186–191 (KTKPTQ), and Lys222. UTP-binding positions include 186 to 191 (KTKPTQ) and Lys222. The 251-residue stretch at 291–541 (TIAIVGKYTG…IEAATEQSRL (251 aa)) folds into the Glutamine amidotransferase type-1 domain. Gly353 is an L-glutamine binding site. Cys380 serves as the catalytic Nucleophile; for glutamine hydrolysis. Residues 381–384 (FGMQ), Glu404, and Arg469 each bind L-glutamine. Catalysis depends on residues His514 and Glu516.

It belongs to the CTP synthase family. In terms of assembly, homotetramer.

The enzyme catalyses UTP + L-glutamine + ATP + H2O = CTP + L-glutamate + ADP + phosphate + 2 H(+). It catalyses the reaction L-glutamine + H2O = L-glutamate + NH4(+). It carries out the reaction UTP + NH4(+) + ATP = CTP + ADP + phosphate + 2 H(+). The protein operates within pyrimidine metabolism; CTP biosynthesis via de novo pathway; CTP from UDP: step 2/2. With respect to regulation, allosterically activated by GTP, when glutamine is the substrate; GTP has no effect on the reaction when ammonia is the substrate. The allosteric effector GTP functions by stabilizing the protein conformation that binds the tetrahedral intermediate(s) formed during glutamine hydrolysis. Inhibited by the product CTP, via allosteric rather than competitive inhibition. Its function is as follows. Catalyzes the ATP-dependent amination of UTP to CTP with either L-glutamine or ammonia as the source of nitrogen. Regulates intracellular CTP levels through interactions with the four ribonucleotide triphosphates. The sequence is that of CTP synthase from Rhizobium etli (strain CIAT 652).